Reading from the N-terminus, the 674-residue chain is Leucine-rich repeat transmembrane protein FLRT1 (674 aa).

The first 51 residues, 1–51 (MVVAHSAATATTTPAATVTATVVMTTATMDLRDWLFLCYGLIAFLTEVIDS), serve as a signal peptide directing secretion. The Extracellular portion of the chain corresponds to 52–552 (TTCPSVCRCD…QNAGPMAGLP (501 aa)). 2 cysteine pairs are disulfide-bonded: C54–C60 and C58–C67. Positions 54–80 (CPSVCRCDNGFIYCNDRGLTSIPSDIP) constitute an LRRNT domain. 10 LRR repeats span residues 81–105 (DDAT…LKTK), 106–126 (VKVQ…INLP), 127–149 (RSLR…SLAR), 151–175 (PLLE…AFAD), 176–197 (SKQL…SGLP), 198–220 (HTLE…AFKG), 222–246 (NSLR…TFSR), 247–269 (LQNL…NLPS), 270–292 (AHLQ…TLAK), and 293–316 (MREL…LFDD). N305 is a glycosylation site (N-linked (GlcNAc...) asparagine). In terms of domain architecture, LRRCT spans 328 to 379 (NPWFCGCNLMWLRDWVRARAAVVNVRGLMCQGPEKVRGMAIKDITSEMDECF). C332 and C357 are disulfide-bonded. In terms of domain architecture, Fibronectin type-III spans 437–532 (KTLVIQVKPL…VCAKAETADS (96 aa)). The chain crosses the membrane as a helical span at residues 553–573 (LAGIIGGAVALVFLFLVLGAI). The Cytoplasmic portion of the chain corresponds to 574–674 (CWYVHRAGEL…GIPDVDYSYT (101 aa)). Phosphotyrosine occurs at positions 600, 633, and 671.

Interacts with FGFR1. Interacts (via extracellular domain) with ADGRL1/LPHN1 and ADGRL3 (via olfactomedin-like domain). Phosphorylated in response to FGFR1 signaling, but is not a direct substrate of FGFR1 or SRC. A mutant where the Tyr phosphorylation sites have been replaced by Phe displays constitutive FGFR1-dependent activation of downstream MAP kinases. Post-translationally, N-glycosylated. In terms of processing, proteolytic cleavage in the juxtamembrane region gives rise to a soluble ectodomain. In terms of tissue distribution, detected in brain (at protein level).

It is found in the cell membrane. The protein localises to the endoplasmic reticulum membrane. Its subcellular location is the cytoplasmic vesicle membrane. The protein resides in the cytoplasm. It localises to the perinuclear region. It is found in the cell junction. The protein localises to the focal adhesion. Its subcellular location is the secreted. The protein resides in the cell projection. It localises to the neuron projection. Its function is as follows. Plays a role in fibroblast growth factor-mediated signaling cascades that lead to the activation of MAP kinases. Promotes neurite outgrowth via FGFR1-mediated activation of downstream MAP kinases. Promotes an increase both in neurite number and in neurite length. May play a role in cell-cell adhesion and cell guidance via its interaction with ADGRL1/LPHN1 and ADGRL3. This is Leucine-rich repeat transmembrane protein FLRT1 from Mus musculus (Mouse).